Consider the following 215-residue polypeptide: Large ribosomal subunit protein bL25 (215 aa).

The tract at residues 160–215 (GDLPLPEGSELVTEPEETVMSVVAPETEEEPDTEEDEEGEEDVEEESEEEEEESEE) is disordered. Acidic residues predominate over residues 185–215 (ETEEEPDTEEDEEGEEDVEEESEEEEEESEE).

The protein belongs to the bacterial ribosomal protein bL25 family. CTC subfamily. In terms of assembly, part of the 50S ribosomal subunit; part of the 5S rRNA/L5/L18/L25 subcomplex. Contacts the 5S rRNA. Binds to the 5S rRNA independently of L5 and L18.

Its function is as follows. This is one of the proteins that binds to the 5S RNA in the ribosome where it forms part of the central protuberance. This chain is Large ribosomal subunit protein bL25, found in Natranaerobius thermophilus (strain ATCC BAA-1301 / DSM 18059 / JW/NM-WN-LF).